A 24-amino-acid chain; its full sequence is Superoxide dismutase [Cu-Zn] (24 aa).

It belongs to the Cu-Zn superoxide dismutase family. Homodimer. The cofactor is Cu cation. Requires Zn(2+) as cofactor.

The protein localises to the cytoplasm. It carries out the reaction 2 superoxide + 2 H(+) = H2O2 + O2. In terms of biological role, destroys radicals which are normally produced within the cells and which are toxic to biological systems. The polypeptide is Superoxide dismutase [Cu-Zn] (sod1) (Aquarana catesbeiana (American bullfrog)).